A 543-amino-acid polypeptide reads, in one-letter code: NADH-ubiquinone oxidoreductase chain 4 (543 aa).

14 helical membrane-spanning segments follow: residues 5 to 25 (FLMF…IIWS), 84 to 104 (VVAF…YILF), 129 to 149 (VDGI…IALM), 161 to 181 (SYLI…LVLD), 182 to 202 (ILLF…LIGL), 213 to 233 (FYIF…ILTM), 254 to 274 (IQIF…PTIF), 287 to 307 (PLGG…YGIF), 321 to 341 (YTYI…FSTL), 350 to 370 (IAYS…SNTI), 377 to 397 (ILLG…VGGV), 416 to 436 (MAPL…GVPL), 456 to 476 (LLGL…IFLF), and 501 to 521 (FYAL…PSII).

The protein belongs to the complex I subunit 4 family.

Its subcellular location is the mitochondrion membrane. The catalysed reaction is a ubiquinone + NADH + 5 H(+)(in) = a ubiquinol + NAD(+) + 4 H(+)(out). Functionally, core subunit of the mitochondrial membrane respiratory chain NADH dehydrogenase (Complex I) that is believed to belong to the minimal assembly required for catalysis. Complex I functions in the transfer of electrons from NADH to the respiratory chain. The immediate electron acceptor for the enzyme is believed to be ubiquinone. This chain is NADH-ubiquinone oxidoreductase chain 4 (ndh-4), found in Neurospora crassa (strain ATCC 24698 / 74-OR23-1A / CBS 708.71 / DSM 1257 / FGSC 987).